The chain runs to 329 residues: DNA-directed RNA polymerase subunit alpha (329 aa).

The tract at residues M1–R234 is alpha N-terminal domain (alpha-NTD). The tract at residues F248 to L329 is alpha C-terminal domain (alpha-CTD).

This sequence belongs to the RNA polymerase alpha chain family. In terms of assembly, homodimer. The RNAP catalytic core consists of 2 alpha, 1 beta, 1 beta' and 1 omega subunit. When a sigma factor is associated with the core the holoenzyme is formed, which can initiate transcription.

The catalysed reaction is RNA(n) + a ribonucleoside 5'-triphosphate = RNA(n+1) + diphosphate. Its function is as follows. DNA-dependent RNA polymerase catalyzes the transcription of DNA into RNA using the four ribonucleoside triphosphates as substrates. This Shewanella putrefaciens (strain CN-32 / ATCC BAA-453) protein is DNA-directed RNA polymerase subunit alpha.